Reading from the N-terminus, the 601-residue chain is Leucine-rich repeat-containing protein 40 (601 aa).

LRR repeat units lie at residues 33-56, 79-101, 102-124, 125-148, 150-170, 171-193, 194-217, 219-239, 240-264, 266-285, 286-308, 309-334, 336-355, 397-420, 423-446, 447-469, 470-492, 493-516, 518-539, 540-563, and 565-586; these read ARKS…VWRL, QTDL…DVKL, LPAL…SIGD, LEQL…VWRL, NLRC…DLGQ, LVNL…SLAN, LQNL…ISQM, NLRM…VLAQ, MESL…CCKT, KELH…HLKH, LNAL…EITL, LQGL…TLPK, KSLS…LLTK, IKTL…VFDA, GNPV…IVDL, KDSL…DFCH, LKQL…ELEG, LIKL…LYRI, SLET…QMKT, LSRL…LGNC, and SLRA…ILIK.

The polypeptide is Leucine-rich repeat-containing protein 40 (lrrc40) (Danio rerio (Zebrafish)).